The following is a 104-amino-acid chain: Transcription elongation factor A protein-like 9 (104 aa).

The tract at residues 1 to 48 (MKPCQKMEGNLEKEDEPKPEEEPKPEEKPEEGQEPEEEEKSEETFRER) is disordered. Residues 9-31 (GNLEKEDEPKPEEEPKPEEKPEE) are compositionally biased toward basic and acidic residues. Acidic residues predominate over residues 32–41 (GQEPEEEEKS).

Belongs to the TFS-II family. TFA subfamily.

The protein resides in the nucleus. In terms of biological role, may be involved in transcriptional regulation. In Mus musculus (Mouse), this protein is Transcription elongation factor A protein-like 9 (Tceal9).